Reading from the N-terminus, the 214-residue chain is Ribonuclease HII (214 aa).

The 189-residue stretch at 26 to 214 (EIVCGVDEAG…PVRAALDLIR (189 aa)) folds into the RNase H type-2 domain. A divalent metal cation is bound by residues Asp32, Glu33, and Asp124.

This sequence belongs to the RNase HII family. Mn(2+) is required as a cofactor. Requires Mg(2+) as cofactor.

Its subcellular location is the cytoplasm. The catalysed reaction is Endonucleolytic cleavage to 5'-phosphomonoester.. In terms of biological role, endonuclease that specifically degrades the RNA of RNA-DNA hybrids. This is Ribonuclease HII from Burkholderia lata (strain ATCC 17760 / DSM 23089 / LMG 22485 / NCIMB 9086 / R18194 / 383).